A 165-amino-acid polypeptide reads, in one-letter code: Phosphopantetheine adenylyltransferase (165 aa).

Serine 9 lines the substrate pocket. ATP-binding positions include 9 to 10 and histidine 17; that span reads SF. Lysine 41, isoleucine 75, and arginine 89 together coordinate substrate. ATP contacts are provided by residues 90–92, glutamate 100, and 125–131; these read GVR and YLFVRSD.

Belongs to the bacterial CoaD family. In terms of assembly, homohexamer. Mg(2+) serves as cofactor.

The protein resides in the cytoplasm. It catalyses the reaction (R)-4'-phosphopantetheine + ATP + H(+) = 3'-dephospho-CoA + diphosphate. It participates in cofactor biosynthesis; coenzyme A biosynthesis; CoA from (R)-pantothenate: step 4/5. Functionally, reversibly transfers an adenylyl group from ATP to 4'-phosphopantetheine, yielding dephospho-CoA (dPCoA) and pyrophosphate. The sequence is that of Phosphopantetheine adenylyltransferase from Borrelia hermsii (strain HS1 / DAH).